The primary structure comprises 94 residues: Putative pterin-4-alpha-carbinolamine dehydratase (94 aa).

This sequence belongs to the pterin-4-alpha-carbinolamine dehydratase family.

It carries out the reaction (4aS,6R)-4a-hydroxy-L-erythro-5,6,7,8-tetrahydrobiopterin = (6R)-L-erythro-6,7-dihydrobiopterin + H2O. The chain is Putative pterin-4-alpha-carbinolamine dehydratase from Caulobacter vibrioides (strain ATCC 19089 / CIP 103742 / CB 15) (Caulobacter crescentus).